An 81-amino-acid polypeptide reads, in one-letter code: Translational regulator CsrA (81 aa).

Residues 59–71 (SQMQHLEQGNFPT) are compositionally biased toward polar residues. The interval 59–81 (SQMQHLEQGNFPTSFDDDDFFNR) is disordered.

It belongs to the CsrA/RsmA family. In terms of assembly, homodimer; the beta-strands of each monomer intercalate to form a hydrophobic core, while the alpha-helices form wings that extend away from the core.

Its subcellular location is the cytoplasm. In terms of biological role, a key translational regulator that binds mRNA to regulate translation initiation and/or mRNA stability. Mediates global changes in gene expression, shifting from rapid growth to stress survival by linking envelope stress, the stringent response and the catabolite repression systems. Usually binds in the 5'-UTR; binding at or near the Shine-Dalgarno sequence prevents ribosome-binding, repressing translation, binding elsewhere in the 5'-UTR can activate translation and/or stabilize the mRNA. Its function is antagonized by small RNA(s). In Psychrobacter sp. (strain PRwf-1), this protein is Translational regulator CsrA.